The primary structure comprises 124 residues: Small ribosomal subunit protein bS6 (124 aa).

The disordered stretch occupies residues 96 to 124 (ETGPSPMMKEVQREEAKKAAAAQPTEAQA). Low complexity predominate over residues 114-124 (AAAAQPTEAQA).

It belongs to the bacterial ribosomal protein bS6 family.

Its function is as follows. Binds together with bS18 to 16S ribosomal RNA. This chain is Small ribosomal subunit protein bS6, found in Burkholderia lata (strain ATCC 17760 / DSM 23089 / LMG 22485 / NCIMB 9086 / R18194 / 383).